Consider the following 231-residue polypeptide: Protein OPG061 (231 aa).

This sequence belongs to the orthopoxvirus OPG058 family.

It localises to the host nucleus. It is found in the host nucleolus. The chain is Protein OPG061 (OPG061) from Homo sapiens (Human).